The chain runs to 352 residues: Uroporphyrinogen decarboxylase (352 aa).

Substrate contacts are provided by residues Arg27–Arg31, Asp77, Tyr154, Thr209, and His325.

Belongs to the uroporphyrinogen decarboxylase family. In terms of assembly, homodimer.

It localises to the cytoplasm. The catalysed reaction is uroporphyrinogen III + 4 H(+) = coproporphyrinogen III + 4 CO2. It participates in porphyrin-containing compound metabolism; protoporphyrin-IX biosynthesis; coproporphyrinogen-III from 5-aminolevulinate: step 4/4. In terms of biological role, catalyzes the decarboxylation of four acetate groups of uroporphyrinogen-III to yield coproporphyrinogen-III. The protein is Uroporphyrinogen decarboxylase of Legionella pneumophila (strain Corby).